Reading from the N-terminus, the 150-residue chain is UPF0756 membrane protein STH2648 (150 aa).

The next 4 helical transmembrane spans lie at 13–33 (ALGV…VLIL), 52–72 (AGLI…EVGW), 85–105 (LAAI…VTLL), and 111–131 (VIVG…GIPV).

It belongs to the UPF0756 family.

It is found in the cell membrane. The protein is UPF0756 membrane protein STH2648 of Symbiobacterium thermophilum (strain DSM 24528 / JCM 14929 / IAM 14863 / T).